The following is a 65-amino-acid chain: Large ribosomal subunit protein bL35 (65 aa).

The segment covering 1-11 (MPKIKTRRSAA) has biased composition (basic residues). 2 disordered regions span residues 1–24 (MPKI…KFKR) and 41–65 (RMRL…MPYA).

It belongs to the bacterial ribosomal protein bL35 family.

This Nitratidesulfovibrio vulgaris (strain DSM 19637 / Miyazaki F) (Desulfovibrio vulgaris) protein is Large ribosomal subunit protein bL35.